The following is a 568-amino-acid chain: MSFKVSRQTYAELMGPTTGDRIRLADTELMIEIEKDFTTYGEEVKFGGGKVIRDGMGQSQHNHDQVMDTVITNAVIIDHWGIVKADVGLKNGRIAEIGKAGNPDIQPNVTMSIGAATEIIAGENMILTAGGIDSHIHFISPQQAEDAMMNGITTMLGGGTGPAAGTAATTCTPGPWHIHSMLRASDGMVMNTGFYGKGNVSLPTPLEEQILAGACGLKLHEDWGSTYAAIDNCLAVADKYDVQVAVHTDTINEGGYLENTIAAMKDRTIHTFHTEGAGGGHAPDIIAVVGQENVLPSSTNPTRPYTINTLDEHLDMLMVCHHLHANIPEDLAFAESRIRKETIAAEDILQDMGAISMMSSDSQAMGRIGEVVLRTWQTAHKMKIQRGTLQEDTSKNDNFRVKRYIAKYTINPAITHGISHALGSVEVGKYADLVLWRPAFFGVKPSVILKGGMIAASLMGDPNASIPTPQPVHYRYMFGGYGGGIKTSCFTFVSQAALAAGLVDQLKLDKNLIEVKNTRNLRKKDMIHNSATPKMEVDPETYEVRADGQLLTCGAEDVLPMAQRYFLF.

One can recognise a Urease domain in the interval 130–568; that stretch reads GGIDSHIHFI…LPMAQRYFLF (439 aa). Ni(2+)-binding residues include H135, H137, and K218. An N6-carboxylysine modification is found at K218. H220 is a substrate binding site. Ni(2+) is bound by residues H247 and H273. The active-site Proton donor is the H321. A Ni(2+)-binding site is contributed by D361.

It belongs to the metallo-dependent hydrolases superfamily. Urease alpha subunit family. In terms of assembly, heterotrimer of UreA (gamma), UreB (beta) and UreC (alpha) subunits. Three heterotrimers associate to form the active enzyme. Ni cation serves as cofactor. Post-translationally, carboxylation allows a single lysine to coordinate two nickel ions.

The protein localises to the cytoplasm. The catalysed reaction is urea + 2 H2O + H(+) = hydrogencarbonate + 2 NH4(+). Its pathway is nitrogen metabolism; urea degradation; CO(2) and NH(3) from urea (urease route): step 1/1. This chain is Urease subunit alpha, found in Nitrosospira multiformis (strain ATCC 25196 / NCIMB 11849 / C 71).